A 334-amino-acid chain; its full sequence is Transcription factor TGA2.1 (334 aa).

A compositionally biased stretch (polar residues) spans Met-1 to Val-13. Residues Met-1 to Gln-49 are disordered. Residues Asp-38 to Gln-49 are compositionally biased toward basic and acidic residues. A bZIP domain is found at Asp-48 to Lys-92. The segment at Lys-50–Lys-70 is basic motif. The leucine-zipper stretch occupies residues Leu-76 to Leu-90. The DOG1 domain occupies Ala-115–Arg-331.

This sequence belongs to the bZIP family. In terms of assembly, interacts with NPR1/NH1 and NPR3/NH3.

It localises to the nucleus. Its function is as follows. Plays a negative role in rice basal defense responses to the bacterial blight pathogen Xanthomomas oryzae pv. oryzae (Xoo). May function in both positive and negative regulation of rice defense genes. Binds DNA in vitro. Acts as a transcriptional activator when bound to NPR1/NH1 in vitro. Binds to the promoter sequence of CRK10 in vitro. The polypeptide is Transcription factor TGA2.1 (Oryza sativa subsp. japonica (Rice)).